Reading from the N-terminus, the 410-residue chain is Arginine deiminase (410 aa).

Catalysis depends on C398, which acts as the Amidino-cysteine intermediate.

Belongs to the arginine deiminase family.

It localises to the cytoplasm. The catalysed reaction is L-arginine + H2O = L-citrulline + NH4(+). It participates in amino-acid degradation; L-arginine degradation via ADI pathway; carbamoyl phosphate from L-arginine: step 1/2. The sequence is that of Arginine deiminase from Limosilactobacillus reuteri (strain DSM 20016) (Lactobacillus reuteri).